The primary structure comprises 209 residues: Large ribosomal subunit protein uL3 (209 aa).

Q150 carries the post-translational modification N5-methylglutamine.

Belongs to the universal ribosomal protein uL3 family. As to quaternary structure, part of the 50S ribosomal subunit. Forms a cluster with proteins L14 and L19. In terms of processing, methylated by PrmB.

Functionally, one of the primary rRNA binding proteins, it binds directly near the 3'-end of the 23S rRNA, where it nucleates assembly of the 50S subunit. This chain is Large ribosomal subunit protein uL3, found in Vibrio campbellii (strain ATCC BAA-1116).